A 553-amino-acid chain; its full sequence is Arginine--tRNA ligase (553 aa).

A 'HIGH' region motif is present at residues 130 to 140; it reads ANPTGPVHLGG.

This sequence belongs to the class-I aminoacyl-tRNA synthetase family. As to quaternary structure, monomer.

The protein resides in the cytoplasm. It carries out the reaction tRNA(Arg) + L-arginine + ATP = L-arginyl-tRNA(Arg) + AMP + diphosphate. This Saccharopolyspora erythraea (strain ATCC 11635 / DSM 40517 / JCM 4748 / NBRC 13426 / NCIMB 8594 / NRRL 2338) protein is Arginine--tRNA ligase.